The following is a 172-amino-acid chain: uncharacterized protein (172 aa).

A compositionally biased stretch (low complexity) spans 1 to 28 (MAAAGVTAKAGGGTSAAAASLIRARSPA). The segment at 1 to 172 (MAAAGVTAKA…GGRRSGRDAG (172 aa)) is disordered. The span at 58-68 (PRRRSRARRGH) shows a compositional bias: basic residues. Gly residues predominate over residues 80 to 100 (TVGGEGQASQIGGGGGGGGGR). The span at 129–138 (PGLASSPGVA) shows a compositional bias: low complexity. Over residues 139 to 165 (PAGGSGGLWSGAGLCSGLGARGFPGGR) the composition is skewed to gly residues.

This is an uncharacterized protein from Homo sapiens (Human).